Here is a 345-residue protein sequence, read N- to C-terminus: Isocitrate/homoisocitrate dehydrogenase (345 aa).

69-71 (TTT) serves as a coordination point for NADH. Residues R86, R96, R111, Y118, K163, and N165 each contribute to the (2R,3S)-homoisocitrate site. Residue N165 participates in NADH binding. Positions 194, 218, and 222 each coordinate Mg(2+). NADH contacts are provided by residues 251–255 (GSAPD) and N263.

The protein belongs to the isocitrate and isopropylmalate dehydrogenases family. Mn(2+) is required as a cofactor. Requires Mg(2+) as cofactor.

It carries out the reaction D-threo-isocitrate + NAD(+) = 2-oxoglutarate + CO2 + NADH. The catalysed reaction is (2R,3S)-homoisocitrate + NAD(+) = 2-oxoadipate + CO2 + NADH. It participates in amino-acid biosynthesis; L-lysine biosynthesis via AAA pathway; L-alpha-aminoadipate from 2-oxoglutarate: step 4/5. In terms of biological role, catalyzes the NAD(+)-dependent oxidative decarboxylation of homoisocitrate to 2-oxoadipate (alpha-ketoadipate), and of isocitrate to 2-oxoglutarate, at near equal efficiency. May thus play a dual role in glutamate and lysine biosynthesis in vivo. Preferentially uses NAD over NADP. The sequence is that of Isocitrate/homoisocitrate dehydrogenase from Pyrococcus horikoshii (strain ATCC 700860 / DSM 12428 / JCM 9974 / NBRC 100139 / OT-3).